Here is a 404-residue protein sequence, read N- to C-terminus: Sialidase (404 aa).

An N-terminal signal peptide occupies residues 1–27 (MKKFIKILKVLSMAIVLSACNINGIFA). R55 lines the substrate pocket. The active-site Proton acceptor is D80. 3 BNR repeats span residues 89–100 (AKSTDNGQTWDY), 158–169 (VYSDDNGETWSD), and 226–237 (IYSKDNGETWTM). A substrate-binding site is contributed by R263. One copy of the BNR 4 repeat lies at 273–284 (YISYDMGSTWEV). The Nucleophile role is filled by Y365.

The protein belongs to the glycosyl hydrolase 33 family. In terms of processing, it is possible that the sialidase is cleaved in front of a cysteine within the leader peptide, forming a glyceride thioether bond which links the protein to the membrane. A second proteolytic cleavage releases the mature extracellular protein.

The protein resides in the secreted. It catalyses the reaction Hydrolysis of alpha-(2-&gt;3)-, alpha-(2-&gt;6)-, alpha-(2-&gt;8)- glycosidic linkages of terminal sialic acid residues in oligosaccharides, glycoproteins, glycolipids, colominic acid and synthetic substrates.. Sialidases have been suggested to be pathogenic factors in microbial infections. The sequence is that of Sialidase from Paraclostridium sordellii (Clostridium sordellii).